A 170-amino-acid chain; its full sequence is Transcription factor E (170 aa).

The HTH TFE/IIEalpha-type domain occupies 1–93 (MKDVYLYIVE…TWYVNDEVIS (93 aa)).

This sequence belongs to the TFE family. Monomer. Interaction with RNA polymerase subunits RpoF and RpoE is necessary for Tfe stimulatory transcription activity. Able to interact with Tbp and RNA polymerase in the absence of DNA promoter. Interacts both with the preinitiation and elongation complexes.

Its function is as follows. Transcription factor that plays a role in the activation of archaeal genes transcribed by RNA polymerase. Facilitates transcription initiation by enhancing TATA-box recognition by TATA-box-binding protein (Tbp), and transcription factor B (Tfb) and RNA polymerase recruitment. Not absolutely required for transcription in vitro, but particularly important in cases where Tbp or Tfb function is not optimal. It dynamically alters the nucleic acid-binding properties of RNA polymerases by stabilizing the initiation complex and destabilizing elongation complexes. Seems to translocate with the RNA polymerase following initiation and acts by binding to the non template strand of the transcription bubble in elongation complexes. The polypeptide is Transcription factor E (Pyrobaculum calidifontis (strain DSM 21063 / JCM 11548 / VA1)).